The following is a 325-amino-acid chain: Thioredoxin reductase (325 aa).

FAD contacts are provided by residues 10 to 13, 39 to 40, glutamine 44, asparagine 53, valine 86, cysteine 143, aspartate 286, and 293 to 295; these read SGPS, IA, and RQA. The cysteines at positions 140 and 143 are disulfide-linked.

This sequence belongs to the class-II pyridine nucleotide-disulfide oxidoreductase family. In terms of assembly, homodimer. The cofactor is FAD.

Its subcellular location is the cytoplasm. It catalyses the reaction [thioredoxin]-dithiol + NADP(+) = [thioredoxin]-disulfide + NADPH + H(+). This is Thioredoxin reductase (TRR1) from Pneumocystis carinii.